We begin with the raw amino-acid sequence, 470 residues long: MNPNQKIITIGSVSLGLVILSIILHVVSIIVTVLVLSNTGTGLNCNGTIIKEYNETVRVERITQWYNTNIIEYIGRPSNEYYMNNTESLCEAQGFAPFSKDNGIRIGSRGHVFVIREPFVSCSPLECRTFFLTQGSLLNDKHSNGTVKDRSPYRTLMSVEVGQSPNVYQARFEAVAWSATACHDGKKWMTVGVTGPDAQAVAVVHYGGVPVDVINSWAGDILRTQESSCTCIKGDCYWVMTDGPANRQAQYRIFKAKDGRIIGQNDINFNGGHIEECSCYPNEGKVECVCRDNWTGTNRPILVISPNLSYTVGYLCAGIPTDTPRGEDSQFTGSCTSPLGSQGYGVKGFGFRQGNDVWVGRTISKTSRSGFEILKIKNGWTQNSKDQIQKQVIVDNLNWSGYSGSFTLPVELTKKGCLVPCFWVEMIRGKPEEVTIWTSSSSIVMCGVDNKVANWSWHDGAILPFDIDKM.

The Intravirion portion of the chain corresponds to 1 to 14 (MNPNQKIITIGSVS). Residues 11–32 (GSVSLGLVILSIILHVVSIIVT) form an involved in apical transport and lipid raft association region. A helical membrane pass occupies residues 15-35 (LGLVILSIILHVVSIIVTVLV). The interval 32–86 (TVLVLSNTGTGLNCNGTIIKEYNETVRVERITQWYNTNIIEYIGRPSNEYYMNNT) is hypervariable stalk region. Residues 36–470 (LSNTGTGLNC…AILPFDIDKM (435 aa)) are Virion surface-facing. N-linked (GlcNAc...) asparagine; by host glycans are attached at residues Asn46, Asn54, and Asn84. The segment at 89–470 (LCEAQGFAPF…AILPFDIDKM (382 aa)) is head of neuraminidase. 8 disulfides stabilise this stretch: Cys90–Cys417, Cys122–Cys127, Cys182–Cys229, Cys231–Cys236, Cys277–Cys290, Cys279–Cys288, Cys316–Cys335, and Cys421–Cys446. Arg116 serves as a coordination point for substrate. Asn144 carries N-linked (GlcNAc...) asparagine; by host glycosylation. Asp149 (proton donor/acceptor) is an active-site residue. A substrate-binding site is contributed by Arg150. A substrate-binding site is contributed by 275–276 (EE). Arg291 is a substrate binding site. Asp292 is a binding site for Ca(2+). N-linked (GlcNAc...) asparagine; by host glycosylation is present at Asn293. Gly296 is a Ca(2+) binding site. Asn307 carries N-linked (GlcNAc...) asparagine; by host glycosylation. Asp322 contributes to the Ca(2+) binding site. Arg368 provides a ligand contact to substrate. A glycan (N-linked (GlcNAc...) asparagine; by host) is linked at Asn398. Catalysis depends on Tyr402, which acts as the Nucleophile. An N-linked (GlcNAc...) asparagine; by host glycan is attached at Asn454.

The protein belongs to the glycosyl hydrolase 34 family. As to quaternary structure, homotetramer. The cofactor is Ca(2+). Post-translationally, N-glycosylated.

It localises to the virion membrane. Its subcellular location is the host apical cell membrane. It catalyses the reaction Hydrolysis of alpha-(2-&gt;3)-, alpha-(2-&gt;6)-, alpha-(2-&gt;8)- glycosidic linkages of terminal sialic acid residues in oligosaccharides, glycoproteins, glycolipids, colominic acid and synthetic substrates.. Inhibited by the neuraminidase inhibitors zanamivir (Relenza) and oseltamivir (Tamiflu). These drugs interfere with the release of progeny virus from infected cells and are effective against all influenza strains. Resistance to neuraminidase inhibitors is quite rare. Its function is as follows. Catalyzes the removal of terminal sialic acid residues from viral and cellular glycoconjugates. Cleaves off the terminal sialic acids on the glycosylated HA during virus budding to facilitate virus release. Additionally helps virus spread through the circulation by further removing sialic acids from the cell surface. These cleavages prevent self-aggregation and ensure the efficient spread of the progeny virus from cell to cell. Otherwise, infection would be limited to one round of replication. Described as a receptor-destroying enzyme because it cleaves a terminal sialic acid from the cellular receptors. May facilitate viral invasion of the upper airways by cleaving the sialic acid moieties on the mucin of the airway epithelial cells. Likely to plays a role in the budding process through its association with lipid rafts during intracellular transport. May additionally display a raft-association independent effect on budding. Plays a role in the determination of host range restriction on replication and virulence. Sialidase activity in late endosome/lysosome traffic seems to enhance virus replication. The protein is Neuraminidase of Aves (Horse).